Here is a 367-residue protein sequence, read N- to C-terminus: Putative S-adenosyl-L-methionine-dependent methyltransferase MT0751 (367 aa).

S-adenosyl-L-methionine-binding positions include Asp137 and 166-167; that span reads DL. Residues 348 to 358 show a composition bias toward polar residues; that stretch reads TRSDAHQASTT. The interval 348–367 is disordered; sequence TRSDAHQASTTAPPPPGLTG.

The protein belongs to the UPF0677 family.

Functionally, exhibits S-adenosyl-L-methionine-dependent methyltransferase activity. The sequence is that of Putative S-adenosyl-L-methionine-dependent methyltransferase MT0751 from Mycobacterium tuberculosis (strain CDC 1551 / Oshkosh).